Consider the following 261-residue polypeptide: 3-hydroxyacyl-CoA dehydrogenase type-2 (261 aa).

Ala2 bears the N-acetylalanine mark. Positions 20, 22, and 41 each coordinate NAD(+). Residue Lys53 is modified to N6-acetyllysine; alternate. Lys53 is modified (N6-succinyllysine; alternate). NAD(+) contacts are provided by Asp64 and Val65. Lys69 is subject to N6-acetyllysine. An NAD(+)-binding site is contributed by Cys91. Residues Lys99 and Lys105 each carry the N6-acetyllysine modification. Ser155 contacts substrate. 4 residues coordinate NAD(+): Tyr168, Lys172, Phe201, and Thr203. Tyr168 functions as the Proton acceptor in the catalytic mechanism. Lys212 is subject to N6-acetyllysine; alternate. Lys212 is modified (N6-succinyllysine; alternate).

It belongs to the short-chain dehydrogenases/reductases (SDR) family. As to quaternary structure, homotetramer. Component of mitochondrial ribonuclease P, a complex composed of TRMT10C/MRPP1, HSD17B10/MRPP2 and PRORP/MRPP3. Interacts with TRMT10C/MRPP1; forming the MRPP1-MRPP2 subcomplex of the mitochondrial ribonuclease P complex. Ubiquitously expressed in normal tissues but is overexpressed in neurons affected in AD.

The protein localises to the mitochondrion. It is found in the mitochondrion matrix. The protein resides in the mitochondrion nucleoid. The enzyme catalyses a (3S)-3-hydroxyacyl-CoA + NAD(+) = a 3-oxoacyl-CoA + NADH + H(+). It carries out the reaction (2S,3S)-3-hydroxy-2-methylbutanoyl-CoA + NAD(+) = 2-methyl-3-oxobutanoyl-CoA + NADH + H(+). It catalyses the reaction testosterone + NAD(+) = androst-4-ene-3,17-dione + NADH + H(+). The catalysed reaction is 5alpha-androstane-3alpha,17beta-diol + NAD(+) = 17beta-hydroxy-5alpha-androstan-3-one + NADH + H(+). The enzyme catalyses 17beta-estradiol + NAD(+) = estrone + NADH + H(+). It carries out the reaction cholate + NAD(+) = 3alpha,12alpha-dihydroxy-7-oxo-5beta-cholanate + NADH + H(+). It catalyses the reaction (3S)-3-hydroxybutanoyl-CoA + NAD(+) = acetoacetyl-CoA + NADH + H(+). The catalysed reaction is (3S)-hydroxyoctanoyl-CoA + NAD(+) = 3-oxooctanoyl-CoA + NADH + H(+). The enzyme catalyses (3S)-hydroxyhexadecanoyl-CoA + NAD(+) = 3-oxohexadecanoyl-CoA + NADH + H(+). It carries out the reaction 17beta-hydroxy-5alpha-androstan-3-one + NAD(+) = 5alpha-androstan-3,17-dione + NADH + H(+). It catalyses the reaction 5alpha-pregnan-20beta-ol-3-one + NAD(+) = 5alpha-pregnane-3,20-dione + NADH + H(+). The catalysed reaction is 3alpha-hydroxy-5alpha-pregnan-20-one + NAD(+) = 5alpha-pregnane-3,20-dione + NADH + H(+). The enzyme catalyses cortisone + NAD(+) = 17alpha-hydroxypregn-4-en-3,11,20-trione-21-al + NADH + H(+). It carries out the reaction 11-dehydrocorticosterone + NAD(+) = pregn-4-ene-3,11,20,21-tetraone + NADH + H(+). It catalyses the reaction cortisol + NAD(+) = 11beta,17alpha-dihydroxypregn-4-ene-3,20,21-trione + NADH + H(+). The catalysed reaction is chenodeoxycholate + NAD(+) = 7-oxolithocholate + NADH + H(+). The enzyme catalyses ursodeoxycholate + NAD(+) = 7-oxolithocholate + NADH + H(+). It carries out the reaction 3beta,7beta-dihydroxy-5beta-cholan-24-oate + NAD(+) = 3beta-hydroxy-7-oxo-5beta-cholan-24-oate + NADH + H(+). Its pathway is amino-acid degradation; L-isoleucine degradation. The protein operates within lipid metabolism; fatty acid beta-oxidation. It participates in steroid metabolism. It functions in the pathway lipid metabolism; bile acid biosynthesis. Its activity is regulated as follows. The phospholipase C-like activity toward cardiolipin is inhibited by amyloid-beta peptide. Functionally, mitochondrial dehydrogenase involved in pathways of fatty acid, branched-chain amino acid and steroid metabolism. Acts as (S)-3-hydroxyacyl-CoA dehydrogenase in mitochondrial fatty acid beta-oxidation, a major degradation pathway of fatty acids. Catalyzes the third step in the beta-oxidation cycle, namely the reversible conversion of (S)-3-hydroxyacyl-CoA to 3-ketoacyl-CoA. Preferentially accepts straight medium- and short-chain acyl-CoA substrates with highest efficiency for (3S)-hydroxybutanoyl-CoA. Acts as 3-hydroxy-2-methylbutyryl-CoA dehydrogenase in branched-chain amino acid catabolic pathway. Catalyzes the oxidation of 3-hydroxy-2-methylbutanoyl-CoA into 2-methyl-3-oxobutanoyl-CoA, a step in isoleucine degradation pathway. Has hydroxysteroid dehydrogenase activity toward steroid hormones and bile acids. Catalyzes the oxidation of 3alpha-, 17beta-, 20beta- and 21-hydroxysteroids and 7alpha- and 7beta-hydroxy bile acids. Oxidizes allopregnanolone/brexanolone at the 3alpha-hydroxyl group, which is known to be critical for the activation of gamma-aminobutyric acid receptors (GABAARs) chloride channel. Has phospholipase C-like activity toward cardiolipin and its oxidized species. Likely oxidizes the 2'-hydroxyl in the head group of cardiolipin to form a ketone intermediate that undergoes nucleophilic attack by water and fragments into diacylglycerol, dihydroxyacetone and orthophosphate. Has higher affinity for cardiolipin with oxidized fatty acids and may degrade these species during the oxidative stress response to protect cells from apoptosis. By interacting with intracellular amyloid-beta, it may contribute to the neuronal dysfunction associated with Alzheimer disease (AD). Essential for structural and functional integrity of mitochondria. In addition to mitochondrial dehydrogenase activity, moonlights as a component of mitochondrial ribonuclease P, a complex that cleaves tRNA molecules in their 5'-ends. Together with TRMT10C/MRPP1, forms a subcomplex of the mitochondrial ribonuclease P, named MRPP1-MRPP2 subcomplex, which displays functions that are independent of the ribonuclease P activity. The MRPP1-MRPP2 subcomplex catalyzes the formation of N(1)-methylguanine and N(1)-methyladenine at position 9 (m1G9 and m1A9, respectively) in tRNAs; HSD17B10/MRPP2 acting as a non-catalytic subunit. The MRPP1-MRPP2 subcomplex also acts as a tRNA maturation platform: following 5'-end cleavage by the mitochondrial ribonuclease P complex, the MRPP1-MRPP2 subcomplex enhances the efficiency of 3'-processing catalyzed by ELAC2, retains the tRNA product after ELAC2 processing and presents the nascent tRNA to the mitochondrial CCA tRNA nucleotidyltransferase TRNT1 enzyme. Associates with mitochondrial DNA complexes at the nucleoids to initiate RNA processing and ribosome assembly. The sequence is that of 3-hydroxyacyl-CoA dehydrogenase type-2 (HSD17B10) from Homo sapiens (Human).